Here is a 198-residue protein sequence, read N- to C-terminus: RNA-free ribonuclease P (198 aa).

This sequence belongs to the HARP family.

It catalyses the reaction Endonucleolytic cleavage of RNA, removing 5'-extranucleotides from tRNA precursor.. RNA-free RNase P that catalyzes the removal of the 5'-leader sequence from pre-tRNA to produce the mature 5'-terminus. The protein is RNA-free ribonuclease P of Nitrosococcus oceani (strain ATCC 19707 / BCRC 17464 / JCM 30415 / NCIMB 11848 / C-107).